The chain runs to 425 residues: Serine hydroxymethyltransferase (425 aa).

(6S)-5,6,7,8-tetrahydrofolate-binding positions include leucine 126 and 130-132; that span reads GHL. Lysine 234 carries the post-translational modification N6-(pyridoxal phosphate)lysine.

This sequence belongs to the SHMT family. Homodimer. It depends on pyridoxal 5'-phosphate as a cofactor.

The protein resides in the cytoplasm. The enzyme catalyses (6R)-5,10-methylene-5,6,7,8-tetrahydrofolate + glycine + H2O = (6S)-5,6,7,8-tetrahydrofolate + L-serine. Its pathway is one-carbon metabolism; tetrahydrofolate interconversion. The protein operates within amino-acid biosynthesis; glycine biosynthesis; glycine from L-serine: step 1/1. In terms of biological role, catalyzes the reversible interconversion of serine and glycine with tetrahydrofolate (THF) serving as the one-carbon carrier. This reaction serves as the major source of one-carbon groups required for the biosynthesis of purines, thymidylate, methionine, and other important biomolecules. Also exhibits THF-independent aldolase activity toward beta-hydroxyamino acids, producing glycine and aldehydes, via a retro-aldol mechanism. The polypeptide is Serine hydroxymethyltransferase (Desulfotalea psychrophila (strain LSv54 / DSM 12343)).